We begin with the raw amino-acid sequence, 347 residues long: Probable dual-specificity RNA methyltransferase RlmN (347 aa).

Catalysis depends on Glu91, which acts as the Proton acceptor. The Radical SAM core domain occupies 97–327 (YKYGNSICVS…ATVRREMGSD (231 aa)). A disulfide bond links Cys104 and Cys332. Cys111, Cys115, and Cys118 together coordinate [4Fe-4S] cluster. S-adenosyl-L-methionine is bound by residues 158–159 (GE), Ser190, 213–215 (SLH), and Asn289. Cys332 acts as the S-methylcysteine intermediate in catalysis.

This sequence belongs to the radical SAM superfamily. RlmN family. [4Fe-4S] cluster is required as a cofactor.

Its subcellular location is the cytoplasm. The enzyme catalyses adenosine(2503) in 23S rRNA + 2 reduced [2Fe-2S]-[ferredoxin] + 2 S-adenosyl-L-methionine = 2-methyladenosine(2503) in 23S rRNA + 5'-deoxyadenosine + L-methionine + 2 oxidized [2Fe-2S]-[ferredoxin] + S-adenosyl-L-homocysteine. It catalyses the reaction adenosine(37) in tRNA + 2 reduced [2Fe-2S]-[ferredoxin] + 2 S-adenosyl-L-methionine = 2-methyladenosine(37) in tRNA + 5'-deoxyadenosine + L-methionine + 2 oxidized [2Fe-2S]-[ferredoxin] + S-adenosyl-L-homocysteine. Functionally, specifically methylates position 2 of adenine 2503 in 23S rRNA and position 2 of adenine 37 in tRNAs. In Clostridium perfringens (strain 13 / Type A), this protein is Probable dual-specificity RNA methyltransferase RlmN.